A 281-amino-acid polypeptide reads, in one-letter code: Ethylene-inducing xylanase 1 (281 aa).

The N-terminal stretch at 1–19 (MVSYKAFLITLAAVTRVLT) is a signal peptide. N-linked (GlcNAc...) asparagine glycosylation occurs at Asn23. The region spanning 32-220 (SGTPSSTGTS…SSGSSDITVG (189 aa)) is the GH11 domain. Glu116 acts as the Nucleophile in catalysis. Catalysis depends on Glu207, which acts as the Proton donor. In terms of domain architecture, CBM1 spans 246–281 (TCGALYSQCGGTGFTGSQCCASGTCKYANSYYSQCL).

The protein belongs to the glycosyl hydrolase 11 (cellulase G) family.

It carries out the reaction Endohydrolysis of (1-&gt;4)-beta-D-xylosidic linkages in xylans.. It functions in the pathway glycan degradation; xylan degradation. Functionally, endo-1,4-beta-xylanase involved in the hydrolysis of xylan, a major structural heterogeneous polysaccharide found in plant biomass representing the second most abundant polysaccharide in the biosphere, after cellulose. May act as an elicitor of plant defense responses in certain plants but does not exhibit any cell death when transiently expressed in N.benthamiana. The sequence is that of Ethylene-inducing xylanase 1 from Botryotinia fuckeliana (strain B05.10) (Noble rot fungus).